An 82-amino-acid chain; its full sequence is Small ribosomal subunit protein bS18 (82 aa).

The segment at 1 to 20 (MSEASSAPVRRPFHRRRKTC) is disordered.

Belongs to the bacterial ribosomal protein bS18 family. In terms of assembly, part of the 30S ribosomal subunit. Forms a tight heterodimer with protein bS6.

Its function is as follows. Binds as a heterodimer with protein bS6 to the central domain of the 16S rRNA, where it helps stabilize the platform of the 30S subunit. This is Small ribosomal subunit protein bS18 from Rhizobium etli (strain CIAT 652).